The primary structure comprises 498 residues: UDP-N-acetylmuramate--L-alanine ligase (498 aa).

An ATP-binding site is contributed by 122–128 (GTHGKTS).

The protein belongs to the MurCDEF family.

The protein localises to the cytoplasm. The catalysed reaction is UDP-N-acetyl-alpha-D-muramate + L-alanine + ATP = UDP-N-acetyl-alpha-D-muramoyl-L-alanine + ADP + phosphate + H(+). Its pathway is cell wall biogenesis; peptidoglycan biosynthesis. Cell wall formation. The sequence is that of UDP-N-acetylmuramate--L-alanine ligase from Corynebacterium jeikeium (strain K411).